Consider the following 431-residue polypeptide: tRNA(Ile)-lysidine synthase (431 aa).

25 to 30 (SGGLDS) serves as a coordination point for ATP.

It belongs to the tRNA(Ile)-lysidine synthase family.

Its subcellular location is the cytoplasm. It carries out the reaction cytidine(34) in tRNA(Ile2) + L-lysine + ATP = lysidine(34) in tRNA(Ile2) + AMP + diphosphate + H(+). Ligates lysine onto the cytidine present at position 34 of the AUA codon-specific tRNA(Ile) that contains the anticodon CAU, in an ATP-dependent manner. Cytidine is converted to lysidine, thus changing the amino acid specificity of the tRNA from methionine to isoleucine. This chain is tRNA(Ile)-lysidine synthase, found in Legionella pneumophila (strain Lens).